Here is a 227-residue protein sequence, read N- to C-terminus: Glial cell line-derived neurotrophic factor (227 aa).

The signal sequence occupies residues 1–19; sequence MKLWAILAVCILLLSSVSS. Residues 20 to 93 constitute a propeptide that is removed on maturation; that stretch reads IPLPSNWLAG…EFIQDTIKRL (74 aa). 2 disordered regions span residues 32 to 61 and 93 to 113; these read RSHL…ANMA and LKRS…QSLA. Disulfide bonds link C134/C195, C161/C224, and C165/C226. N-linked (GlcNAc...) asparagine glycans are attached at residues N142 and N178.

Belongs to the TGF-beta family. GDNF subfamily. As to quaternary structure, homodimer; disulfide-linked. Interacts with GFRA1 coreceptor and RET: forms a 2:2:2 ternary complex composed of GDNF ligand, GFRA1 and RET receptor. In terms of tissue distribution, from stage 22, expressed in somites and the pronephros. At stage 24 and 26, expressed in the pharyngeal arches I-III. At stage 31, expression in the eye, central nervous system and pharyngeal arches IV and V increases. Up to stage 34, expression becomes intense at the oral cavity and lateral line structures. At this stage, expression weakens in the pharyngeal arches, and increases in the epibranchial arches. Expressed in the digestive tract in stage 34 embryos.

The protein localises to the secreted. In terms of biological role, neurotrophic factor that enhances survival and morphological differentiation of dopaminergic neurons and increases their high-affinity dopamine uptake. Acts by binding to its coreceptor, GFRA1, leading to autophosphorylation and activation of the RET receptor. This chain is Glial cell line-derived neurotrophic factor, found in Xenopus laevis (African clawed frog).